The following is a 230-amino-acid chain: Ureidoacrylate amidohydrolase RutB (230 aa).

Catalysis depends on D24, which acts as the Proton acceptor. K133 is an active-site residue. The active-site Nucleophile is the C166.

The protein belongs to the isochorismatase family. RutB subfamily.

It carries out the reaction (Z)-3-ureidoacrylate + H2O + H(+) = (Z)-3-aminoacrylate + NH4(+) + CO2. It catalyses the reaction (Z)-3-ureidoacrylate + H2O = (Z)-3-aminoacrylate + carbamate + H(+). The catalysed reaction is (Z)-2-methylureidoacrylate + H2O + H(+) = (Z)-2-methylaminoacrylate + NH4(+) + CO2. Functionally, hydrolyzes ureidoacrylate to form aminoacrylate and carbamate. The carbamate hydrolyzes spontaneously, thereby releasing one of the nitrogen atoms of the pyrimidine ring as ammonia and one of its carbon atoms as CO2. The chain is Ureidoacrylate amidohydrolase RutB from Escherichia coli O81 (strain ED1a).